We begin with the raw amino-acid sequence, 359 residues long: F-box protein At5g49610 (359 aa).

One can recognise an F-box domain in the interval 3 to 52; sequence NQKGALFPDEVILQILARLPVKSLFRFKSVCKSWYRLPSDKYFTSLFNQL.

As to quaternary structure, part of a SCF (SKP1-cullin-F-box) protein ligase complex. Interacts with SKP1A, SKP1B, ASK11, ASK12, ASK13 and ASK14.

The protein operates within protein modification; protein ubiquitination. The polypeptide is F-box protein At5g49610 (Arabidopsis thaliana (Mouse-ear cress)).